Consider the following 330-residue polypeptide: Putative [LysW]-L-2-aminoadipate/[LysW]-L-glutamate phosphate reductase (330 aa).

10–13 contacts NADP(+); it reads SGYI. C142 is an active-site residue. N297 contacts NADP(+).

Belongs to the NAGSA dehydrogenase family. Type 1 subfamily. LysY sub-subfamily.

Its subcellular location is the cytoplasm. It catalyses the reaction [amino-group carrier protein]-C-terminal-N-(1-carboxy-5-oxopentan-1-yl)-L-glutamine + phosphate + NADP(+) = [amino-group carrier protein]-C-terminal-N-(1-carboxy-5-phosphooxy-5-oxopentan-1-yl)-L-glutamine + NADPH + H(+). It carries out the reaction [amino-group carrier protein]-C-terminal-gamma-(L-glutamyl-5-semialdehyde)-L-glutamate + phosphate + NADP(+) = [amino-group carrier protein]-C-terminal-gamma-(5-phospho-L-glutamyl)-L-glutamate + NADPH + H(+). The protein operates within amino-acid biosynthesis; L-lysine biosynthesis via AAA pathway; L-lysine from L-alpha-aminoadipate (Thermus route): step 3/5. It participates in amino-acid biosynthesis; L-arginine biosynthesis. Its function is as follows. Involved in both the arginine and lysine biosynthetic pathways. The polypeptide is Putative [LysW]-L-2-aminoadipate/[LysW]-L-glutamate phosphate reductase (Pyrococcus furiosus (strain ATCC 43587 / DSM 3638 / JCM 8422 / Vc1)).